Consider the following 349-residue polypeptide: Selenide, water dikinase (349 aa).

Residue Cys-17 is part of the active site. ATP contacts are provided by residues Lys-20 and 48–50 (YFD). Asp-51 contributes to the Mg(2+) binding site. Residues Asp-68, Asp-91, and 139–141 (GHS) each bind ATP. Asp-91 provides a ligand contact to Mg(2+). A Mg(2+)-binding site is contributed by Asp-229.

This sequence belongs to the selenophosphate synthase 1 family. Class I subfamily. Homodimer. Mg(2+) is required as a cofactor.

It catalyses the reaction hydrogenselenide + ATP + H2O = selenophosphate + AMP + phosphate + 2 H(+). In terms of biological role, synthesizes selenophosphate from selenide and ATP. This is Selenide, water dikinase from Nitrosomonas eutropha (strain DSM 101675 / C91 / Nm57).